A 1258-amino-acid chain; its full sequence is Plasma membrane calcium-transporting ATPase 3 (1258 aa).

The segment covering 1–19 (MGDMANSSIEFHPKPQQQR) has biased composition (polar residues). A disordered region spans residues 1–22 (MGDMANSSIEFHPKPQQQREVP). Residues 1-97 (MGDMANSSIE…NFIPPKQPKT (97 aa)) lie on the Cytoplasmic side of the membrane. Serine 8 bears the Phosphoserine mark. The helical transmembrane segment at 98-118 (FLQLVWEALQDVTLIILEVAA) threads the bilayer. The Extracellular segment spans residues 119-155 (IVSLGLSFYAPPGEESEACGNVSGGAEDEGEAEAGWI). A helical membrane pass occupies residues 156–176 (EGAAILLSVICVVLVTAFNDW). Residues 177 to 364 (SKEKQFRGLQ…KEKSVLQGKL (188 aa)) lie on the Cytoplasmic side of the membrane. 2 disordered regions span residues 298 to 328 (EEEK…GAVA) and 335 to 354 (KSAE…NVPK). Composition is skewed to basic and acidic residues over residues 299–308 (EEKKDKKGKQ) and 342–354 (MEER…NVPK). The helical transmembrane segment at 365–384 (TKLAVQIGKAGLVMSAITVI) threads the bilayer. Residues 385-417 (ILVLYFVIETFVVDGRVWLAECTPVYVQYFVKF) are Extracellular-facing. The helical transmembrane segment at 418 to 435 (FIIGVTVLVVAVPEGLPL) threads the bilayer. The Cytoplasmic segment spans residues 436–849 (AVTISLAYSV…MWGRNVYDSI (414 aa)). Aspartate 473 serves as the catalytic 4-aspartylphosphate intermediate. Mg(2+) contacts are provided by aspartate 794 and aspartate 798. A helical membrane pass occupies residues 850–869 (SKFLQFQLTVNVVAVIVAFT). The Extracellular portion of the chain corresponds to 870 to 879 (GACITQDSPL). Residues 880–900 (KAVQMLWVNLIMDTFASLALA) form a helical membrane-spanning segment. Residues 901-920 (TEPPTESLLLRKPYGRDKPL) lie on the Cytoplasmic side of the membrane. A helical membrane pass occupies residues 921-943 (ISRTMMKNILGHAVYQLTIIFTL). Topologically, residues 944 to 961 (LFVGELFFDIDSGRNAPL) are extracellular. The chain crosses the membrane as a helical span at residues 962 to 983 (HSPPSEHYTIIFNTFVMMQLFN). At 984 to 1002 (EINARKIHGERNVFDGIFS) the chain is on the cytoplasmic side. Residues 1003–1024 (NPIFCTIVLGTFGIQIVIVQFG) form a helical membrane-spanning segment. Topologically, residues 1025–1034 (GKPFSCSPLS) are extracellular. The chain crosses the membrane as a helical span at residues 1035 to 1056 (TEQWLWCLFVGVGELVWGQVIA). At 1057 to 1258 (TIPTSQLKCL…SPLHSMETSL (202 aa)) the chain is on the cytoplasmic side. Threonine 1079 carries the phosphothreonine modification. The calmodulin-binding subdomain A stretch occupies residues 1097–1114 (LRRGQILWFRGLNRIQTQ). Threonine 1113 carries the post-translational modification Phosphothreonine; by PKC. Positions 1115-1124 (MEVVSTFKRS) are calmodulin-binding subdomain B. Serine 1126 carries the phosphoserine modification. The segment at 1204-1258 (ENEERLRAPPPPPPNQNNNAIDSGIYLTTHATKSATSSAFSSRPGSPLHSMETSL) is disordered. The span at 1231–1245 (TTHATKSATSSAFSS) shows a compositional bias: low complexity.

This sequence belongs to the cation transport ATPase (P-type) (TC 3.A.3) family. Type IIB subfamily. As to quaternary structure, interacts with PDZD11. Interacts (via N-terminus) with YWHAE. In terms of tissue distribution, expressed predominantly in brain and skeletal muscle. Expressed in the molecular layer of the cerebellar cortex, in particular in granule cells (at protein level). Expressed in aldosterone producing glomerulosa cells of adrenal glands (at protein level). Detected at low levels in various tissues including testis, stomach, small intestine, and large intestine. As to expression, most abundant form in brain and most other tissues. Most abundant form in skeletal muscle and is also found in brain and at low levels in testis and kidney.

Its subcellular location is the cell membrane. It is found in the presynaptic cell membrane. The enzyme catalyses Ca(2+)(in) + ATP + H2O = Ca(2+)(out) + ADP + phosphate + H(+). Its function is as follows. ATP-driven Ca(2+) ion pump involved in the maintenance of basal intracellular Ca(2+) levels at the presynaptic terminals. Uses ATP as an energy source to transport cytosolic Ca(2+) ions across the plasma membrane to the extracellular compartment. May counter-transport protons, but the mechanism and the stoichiometry of this Ca(2+)/H(+) exchange remains to be established. This is Plasma membrane calcium-transporting ATPase 3 (Atp2b3) from Rattus norvegicus (Rat).